Here is a 52-residue protein sequence, read N- to C-terminus: UPF0391 membrane protein XCV0245 (52 aa).

2 helical membrane passes run 5-25 and 27-47; these read AIIF…GIAG and ATNI…ISMF.

The protein belongs to the UPF0391 family.

It is found in the cell membrane. The protein is UPF0391 membrane protein XCV0245 of Xanthomonas euvesicatoria pv. vesicatoria (strain 85-10) (Xanthomonas campestris pv. vesicatoria).